Consider the following 758-residue polypeptide: Transcription activator MSS11 (758 aa).

A disordered region spans residues M1–N23. Residues S51–L83 form the LisH domain. Disordered regions lie at residues T191–N220, L268–Q299, Q322–P355, G428–G454, and K587–S681. Positions D207 to N220 are enriched in polar residues. A compositionally biased stretch (low complexity) spans Q269–Q299. 3 stretches are compositionally biased toward polar residues: residues S345 to P355, T436 to G454, and K587 to V600. The segment covering N605–T664 has biased composition (low complexity). The segment covering P667–T676 has biased composition (basic residues).

Belongs to the MSS11 family. As to quaternary structure, interacts with FLO8, STE12 and TEC1.

It is found in the cytoplasm. It localises to the nucleus. Functionally, transcription factor that regulates pseudohyphal differentiation, invasive growth, floculation, adhesion and starch metabolism in response to nutrient availability. This is Transcription activator MSS11 (MSS11) from Saccharomyces cerevisiae (strain ATCC 204508 / S288c) (Baker's yeast).